A 101-amino-acid polypeptide reads, in one-letter code: Integration host factor subunit alpha (101 aa).

This sequence belongs to the bacterial histone-like protein family. Heterodimer of an alpha and a beta chain.

In terms of biological role, this protein is one of the two subunits of integration host factor, a specific DNA-binding protein that functions in genetic recombination as well as in transcriptional and translational control. The sequence is that of Integration host factor subunit alpha from Maricaulis maris (strain MCS10) (Caulobacter maris).